Here is a 111-residue protein sequence, read N- to C-terminus: Translation initiation factor 1A 1 (111 aa).

The tract at residues 1–26 (MTLADLKKPTSRATPSTEETFTRVRT) is disordered. The region spanning 22 to 96 (TRVRTPRREN…EKADVIWKYT (75 aa)) is the S1-like domain.

Belongs to the eIF-1A family.

Functionally, seems to be required for maximal rate of protein biosynthesis. Enhances ribosome dissociation into subunits and stabilizes the binding of the initiator Met-tRNA(I) to 40 S ribosomal subunits. This chain is Translation initiation factor 1A 1 (eIF1A1), found in Methanosarcina acetivorans (strain ATCC 35395 / DSM 2834 / JCM 12185 / C2A).